The primary structure comprises 732 residues: Myosin heavy chain kinase B (732 aa).

In terms of domain architecture, Alpha-type protein kinase spans 124-328; that stretch reads DPYTTTAQWT…ICQYLNLQSI (205 aa). Residue 298-303 coordinates ATP; it reads GIGNLG. The tract at residues 331–428 is disordered; it reads KSEKSDCGTV…TNKERSKSKS (98 aa). Residues 356 to 394 are compositionally biased toward low complexity; the sequence is NNNNNNNNNNNNNNNNNNSNNNNNNNSSISKSLVEISSG. Residues 395–404 show a composition bias toward basic and acidic residues; it reads SKERNDRDSP. Over residues 405 to 419 the composition is skewed to polar residues; it reads SRQLFVSNDGNTLNT. 7 WD repeats span residues 458–486, 500–528, 540–568, 580–608, 620–648, 660–688, and 700–730; these read KGYH…RVYD, GHEG…KVWD, GHDK…KVWD, SHAR…KVWD, GHTK…RVWN, GHDR…KIWD, and GHNA…RVWG.

This sequence belongs to the protein kinase superfamily. Alpha-type protein kinase family. ALPK subfamily.

It catalyses the reaction L-threonyl-[myosin heavy-chain] + ATP = O-phospho-L-threonyl-[myosin heavy-chain] + ADP + H(+). In terms of biological role, catalyzes its autophosphorylation, which is needed for enzymatic activity and phosphorylates myosin II heavy chain at a threonine in the C-terminal tail region. This phosphorylation is critical in regulating the assembly and disassembly of myosin II filament. Participates in control of myosin localization. The sequence is that of Myosin heavy chain kinase B (mhkB) from Dictyostelium discoideum (Social amoeba).